The following is a 184-amino-acid chain: Lactoylglutathione lyase (184 aa).

Residue A2 is modified to N-acetylalanine. A disulfide bridge links C19 with C20. One can recognise a VOC domain in the interval 31–177 (LLQQTMLRIK…DGYWIEILNP (147 aa)). Substrate contacts are provided by Q34 and R38. Residue Q34 coordinates Zn(2+). E100 contacts Zn(2+). N104 contacts substrate. Position 107 is a phosphothreonine (T107). Residues R123 and H127 each contribute to the substrate site. H127 contacts Zn(2+). Residue C139 is modified to S-glutathionyl cysteine. K148 is subject to N6-acetyllysine; alternate. Position 148 is an N6-succinyllysine; alternate (K148). Substrate is bound at residue 157 to 158 (KM). E173 contributes to the Zn(2+) binding site. E173 serves as the catalytic Proton donor/acceptor.

This sequence belongs to the glyoxalase I family. In terms of assembly, homodimer. The cofactor is Zn(2+). Glutathionylation at Cys-139 inhibits enzyme activity. In terms of processing, phosphorylated at Thr-107 in the presence of CaMK2. However, this is a consensus site for phosphorylation by CK2 so phosphorylation may be mediated by CK2 rather than CaMK2. Phosphorylation is induced by TNF and suppresses the TNF-induced transcriptional activity of NF-kappa-B. Post-translationally, exists in a nitric oxide (NO)-modified form. The exact nature of the modification is unknown, but it suppresses the TNF-induced transcriptional activity of NF-kappa-B.

The catalysed reaction is (R)-S-lactoylglutathione = methylglyoxal + glutathione. The protein operates within secondary metabolite metabolism; methylglyoxal degradation; (R)-lactate from methylglyoxal: step 1/2. Its function is as follows. Catalyzes the conversion of hemimercaptal, formed from methylglyoxal and glutathione, to S-lactoylglutathione. Involved in the regulation of TNF-induced transcriptional activity of NF-kappa-B. Required for normal osteoclastogenesis. This is Lactoylglutathione lyase (Glo1) from Rattus norvegicus (Rat).